Reading from the N-terminus, the 428-residue chain is Dihydroorotase (428 aa).

2 residues coordinate Zn(2+): histidine 59 and histidine 61. Substrate is bound by residues 61 to 63 (HLR) and asparagine 93. Positions 151, 178, and 231 each coordinate Zn(2+). Asparagine 277 serves as a coordination point for substrate. Residue aspartate 304 participates in Zn(2+) binding. Aspartate 304 is an active-site residue. Substrate is bound by residues histidine 308 and 322–323 (FG).

It belongs to the metallo-dependent hydrolases superfamily. DHOase family. Class I DHOase subfamily. It depends on Zn(2+) as a cofactor.

It catalyses the reaction (S)-dihydroorotate + H2O = N-carbamoyl-L-aspartate + H(+). The protein operates within pyrimidine metabolism; UMP biosynthesis via de novo pathway; (S)-dihydroorotate from bicarbonate: step 3/3. In terms of biological role, catalyzes the reversible cyclization of carbamoyl aspartate to dihydroorotate. This is Dihydroorotase from Bacillus cereus (strain B4264).